A 358-amino-acid chain; its full sequence is Arginase (358 aa).

Positions 146, 174, 176, and 178 each coordinate Mn(2+). Substrate contacts are provided by residues 176–180 (HADIN), 187–189 (SGN), and aspartate 233. Residues aspartate 280 and aspartate 282 each contribute to the Mn(2+) site. Threonine 294 and glutamate 325 together coordinate substrate.

It belongs to the arginase family. As to quaternary structure, homohexamer. Requires Mn(2+) as cofactor.

It is found in the cytoplasm. The catalysed reaction is L-arginine + H2O = urea + L-ornithine. The protein operates within nitrogen metabolism; urea cycle; L-ornithine and urea from L-arginine: step 1/1. The protein is Arginase (aga-1) of Neurospora crassa (strain ATCC 24698 / 74-OR23-1A / CBS 708.71 / DSM 1257 / FGSC 987).